The following is a 239-amino-acid chain: Apoptosis regulator Bcl-2 (239 aa).

A BH4 motif is present at residues 10-30; the sequence is DNREIVMKYIHYKLSQRGYEW. The disordered stretch occupies residues 39-85; that stretch reads PPGAAPAPGIFSSQPGHTPHPAASRDPVARTSPLQTPAAPGAAAGPA. Thr69 carries the post-translational modification Phosphothreonine; by MAPK8. Position 70 is a phosphoserine; by MAPK8 and PKC (Ser70). Over residues 75 to 85 the composition is skewed to low complexity; that stretch reads PAAPGAAAGPA. Residue Ser87 is modified to Phosphoserine; by MAPK8. The interval 92–107 is required for interaction with SEPTIN4 isoform ARTS. Required XIAP-mediated ubiquitination and apoptosis; that stretch reads VVHLTLRQAGDDFSRR. The BH3 motif lies at 93-107; that stretch reads VHLTLRQAGDDFSRR. The short motif at 136 to 155 is the BH1 element; that stretch reads ELFRDGVNWGRIVAFFEFGG. The BH2 signature appears at 187–202; it reads TWIQDNGGWDAFVELY. Residues 212–233 traverse the membrane as a helical segment; the sequence is FSWLSLKTLLSLALVGACITLG.

It belongs to the Bcl-2 family. In terms of assembly, forms homodimers, and heterodimers with BAX, BAD, BAK and Bcl-X(L). Heterodimerization with BAX requires intact BH1 and BH2 motifs, and is necessary for anti-apoptotic activity. Part of a complex composed of SEPTIN4 isoform ARTS, XIAP and BCL2, within the complex interacts (via BH3 domain) with SEPTIN4 isoform ARTS and XIAP, SEPTIN4 isoform ARTS acts as a scaffold protein and stabilizes the complex. Component of the complex, at least composed of LRPPRC, BECN1 and BCL2; the interactions prevent BECN1 from forming an autophagy-inducing complex with PIK3C3. Interacts with EI24. Also interacts with APAF1, BBC3, BCL2L1, BNIPL, MRPL41 and TP53BP2. Binding to FKBP8 seems to target BCL2 to the mitochondria and probably interferes with the binding of BCL2 to its targets. Interacts with BAG1 in an ATP-dependent manner. Interacts with RAF1 (the 'Ser-338' and 'Ser-339' phosphorylated form). Interacts (via the BH4 domain) with EGLN3; the interaction prevents the formation of the BAX-BCL2 complex and inhibits the anti-apoptotic activity of BCL2. Interacts with G0S2; this interaction also prevents the formation of the anti-apoptotic BAX-BCL2 complex. Interacts with RTL10/BOP. Interacts with the SCF(FBXO10) complex. Interacts (via the loop between motifs BH4 and BH3) with NLRP1 (via LRR repeats), but not with NLRP2, NLRP3, NLRP4, PYCARD, nor MEFV. Interacts with GIMAP3/IAN4, GIMAP4/IAN1 and GIMAP5/IAN5. Interacts with BCAP31. Interacts with IRF3; the interaction is inhibited by Sendai virus infection. Interacts with BECN1; thereby inhibiting autophagy in non-starvation conditions. Interacts with AMBRA1; thereby inhibiting autophagy. As to quaternary structure, (Microbial infection) Interacts with Toxoplasma gondii ROP17; the interaction probably promotes BCL2 phosphorylation and degradation. Phosphorylation/dephosphorylation on Ser-70 regulates anti-apoptotic activity. Growth factor-stimulated phosphorylation on Ser-70 by PKC is required for the anti-apoptosis activity and occurs during the G2/M phase of the cell cycle. In the absence of growth factors, BCL2 appears to be phosphorylated by other protein kinases such as ERKs and stress-activated kinases. Phosphorylated by MAPK8/JNK1 at Thr-69, Ser-70 and Ser-87, which stimulates starvation-induced autophagy. Dephosphorylated by protein phosphatase 2A (PP2A). In terms of processing, proteolytically cleaved by caspases during apoptosis. The cleaved protein, lacking the BH4 motif, has pro-apoptotic activity, causes the release of cytochrome c into the cytosol promoting further caspase activity. Post-translationally, monoubiquitinated by PRKN, leading to an increase in its stability. Ubiquitinated by SCF(FBXO10), leading to its degradation by the proteasome. Ubiquitinated by XIAP, leading to its degradation by the proteasome. In terms of tissue distribution, expressed in a variety of tissues.

Its subcellular location is the mitochondrion outer membrane. It localises to the nucleus membrane. The protein localises to the endoplasmic reticulum membrane. The protein resides in the cytoplasm. Its function is as follows. Suppresses apoptosis in a variety of cell systems including factor-dependent lymphohematopoietic and neural cells. Regulates cell death by controlling the mitochondrial membrane permeability. Appears to function in a feedback loop system with caspases. Inhibits caspase activity either by preventing the release of cytochrome c from the mitochondria and/or by binding to the apoptosis-activating factor (APAF-1). Also acts as an inhibitor of autophagy: interacts with BECN1 and AMBRA1 during non-starvation conditions and inhibits their autophagy function. May attenuate inflammation by impairing NLRP1-inflammasome activation, hence CASP1 activation and IL1B release. In Homo sapiens (Human), this protein is Apoptosis regulator Bcl-2 (BCL2).